The sequence spans 384 residues: Methylthioribose-1-phosphate isomerase (384 aa).

The Proton donor role is filled by Asp-255.

It belongs to the eIF-2B alpha/beta/delta subunits family. MtnA subfamily.

Its subcellular location is the cytoplasm. The protein resides in the nucleus. The catalysed reaction is 5-(methylsulfanyl)-alpha-D-ribose 1-phosphate = 5-(methylsulfanyl)-D-ribulose 1-phosphate. Its pathway is amino-acid biosynthesis; L-methionine biosynthesis via salvage pathway; L-methionine from S-methyl-5-thio-alpha-D-ribose 1-phosphate: step 1/6. Its function is as follows. Catalyzes the interconversion of methylthioribose-1-phosphate (MTR-1-P) into methylthioribulose-1-phosphate (MTRu-1-P). The chain is Methylthioribose-1-phosphate isomerase (mri1) from Talaromyces stipitatus (strain ATCC 10500 / CBS 375.48 / QM 6759 / NRRL 1006) (Penicillium stipitatum).